Reading from the N-terminus, the 78-residue chain is Large ribosomal subunit protein uL23 (78 aa).

It belongs to the universal ribosomal protein uL23 family. Part of the 50S ribosomal subunit. Contacts protein L29.

Binds to 23S rRNA. One of the proteins that surrounds the polypeptide exit tunnel on the outside of the ribosome. This chain is Large ribosomal subunit protein uL23, found in Nanoarchaeum equitans (strain Kin4-M).